The chain runs to 810 residues: Hemoglobin-haptoglobin utilization protein B (810 aa).

An N-terminal signal peptide occupies residues 1-22; sequence MPIPFKPVLAAAAIAQAFPAFA. One can recognise a TBDR plug domain in the interval 34–166; the sequence is NEITVTGTHK…LGGAVNYQTK (133 aa). In terms of domain architecture, TBDR beta-barrel spans 175 to 810; sequence DKPYHLGIKG…SYNFTIEAKF (636 aa). The TonB C-terminal box motif lies at 793-810; it reads QRFTSPGRSYNFTIEAKF.

It belongs to the TonB-dependent receptor family.

It is found in the cell outer membrane. Acts as a receptor for hemoglobin or the hemoglobin/haptoglobin complex and is required for heme uptake. The polypeptide is Hemoglobin-haptoglobin utilization protein B (hpuB) (Neisseria meningitidis serogroup A / serotype 4A (strain DSM 15465 / Z2491)).